A 515-amino-acid polypeptide reads, in one-letter code: Bifunctional purine biosynthesis protein PurH (515 aa).

In terms of domain architecture, MGS-like spans M1–V145.

This sequence belongs to the PurH family.

It carries out the reaction (6R)-10-formyltetrahydrofolate + 5-amino-1-(5-phospho-beta-D-ribosyl)imidazole-4-carboxamide = 5-formamido-1-(5-phospho-D-ribosyl)imidazole-4-carboxamide + (6S)-5,6,7,8-tetrahydrofolate. The catalysed reaction is IMP + H2O = 5-formamido-1-(5-phospho-D-ribosyl)imidazole-4-carboxamide. It participates in purine metabolism; IMP biosynthesis via de novo pathway; 5-formamido-1-(5-phospho-D-ribosyl)imidazole-4-carboxamide from 5-amino-1-(5-phospho-D-ribosyl)imidazole-4-carboxamide (10-formyl THF route): step 1/1. It functions in the pathway purine metabolism; IMP biosynthesis via de novo pathway; IMP from 5-formamido-1-(5-phospho-D-ribosyl)imidazole-4-carboxamide: step 1/1. In Streptococcus pneumoniae serotype 19F (strain G54), this protein is Bifunctional purine biosynthesis protein PurH.